We begin with the raw amino-acid sequence, 227 residues long: Class I hydrophobin 4 (227 aa).

Positions Met-1 to Ala-18 are cleaved as a signal peptide. 4 cysteine pairs are disulfide-bonded: Cys-159–Cys-207, Cys-167–Cys-200, Cys-168–Cys-186, and Cys-208–Cys-222. 2 N-linked (GlcNAc...) asparagine glycosylation sites follow: Asn-190 and Asn-219.

It belongs to the fungal hydrophobin family. As to quaternary structure, self-assembles to form functional amyloid fibrils called rodlets. Self-assembly into fibrillar rodlets occurs spontaneously at hydrophobic:hydrophilic interfaces and the rodlets further associate laterally to form amphipathic monolayers. As to expression, expressed in conidia and aerial hyphae.

The protein localises to the secreted. Its subcellular location is the cell wall. In terms of biological role, aerial growth, conidiation, and dispersal of filamentous fungi in the environment rely upon a capability of their secreting small amphipathic proteins called hydrophobins (HPBs) with low sequence identity. Class I can self-assemble into an outermost layer of rodlet bundles on aerial cell surfaces, conferring cellular hydrophobicity that supports fungal growth, development and dispersal; whereas Class II form highly ordered films at water-air interfaces through intermolecular interactions but contribute nothing to the rodlet structure. Hcf-4 is a class I hydrophobin that is involved in the development and germination of conidia. This Passalora fulva (Tomato leaf mold) protein is Class I hydrophobin 4.